Reading from the N-terminus, the 562-residue chain is Endochitinase (562 aa).

Positions 1–20 (MSLLYIILLFTQFLLLPTDA) are cleaved as a signal peptide. The region spanning 27 to 311 (TNIAVYWGQN…EILKNLLTSA (285 aa)) is the GH18 domain. E157 functions as the Proton donor in the catalytic mechanism. Disordered regions lie at residues 329–358 (TSSA…SKVT) and 461–484 (TLSP…SDST). A chitin-binding, high affinity region spans residues 481-562 (SDSTARTLAK…NFSYLESNYF (82 aa)). N553 is a glycosylation site (N-linked (GlcNAc...) asparagine).

This sequence belongs to the glycosyl hydrolase 18 family. Chitinase class V subfamily. In terms of processing, extensively glycosylated with a series of short O-linked mannose oligosaccharides ranging in size from Man(2) to Man(5).

Its subcellular location is the secreted. The protein resides in the cell wall. It catalyses the reaction Random endo-hydrolysis of N-acetyl-beta-D-glucosaminide (1-&gt;4)-beta-linkages in chitin and chitodextrins.. Chitinase is required for cell separation during growth of S.cerevisiae. This Saccharomyces cerevisiae (strain ATCC 204508 / S288c) (Baker's yeast) protein is Endochitinase (CTS1).